Reading from the N-terminus, the 590-residue chain is Melanophilin (590 aa).

The RabBD domain occupies 4 to 124 (RLDLSTLTDE…IGSLEWYYQH (121 aa)). The segment at 64-107 (CARCLQPYRLLLNSRRQCLECSLFVCKSCSHAHPEEQGWLCDPC) adopts an FYVE-type zinc-finger fold. Disordered stretches follow at residues 147–182 (GGGGSEPSLEEGNGDSEQTDEDGDLDTEARDQPLNS), 215–276 (SVPE…AELD), 311–335 (DTSDEDSIQGPRAASQHSKRRARTV), 361–472 (VLPP…SEIS), and 485–590 (GLTV…AQQP). Over residues 154 to 172 (SLEEGNGDSEQTDEDGDLD) the composition is skewed to acidic residues. Positions 215-238 (SVPESAHSLQSLSGEPYSEDTTSL) are enriched in polar residues. The stretch at 339–485 (QILELNKRMS…SRIAALRAAG (147 aa)) forms a coiled coil. A compositionally biased stretch (low complexity) spans 391 to 401 (LTSNISGSSTS). Basic and acidic residues predominate over residues 424 to 433 (GHMETQERNP).

As to quaternary structure, binds RAB27A that has been activated by GTP-binding via its N-terminus. Binds MYO5A via its C-terminal coiled coil domain. In terms of tissue distribution, highly expressed in embryos at day 7; not detectable at day 11. Highly expressed in adult stomach; detected at lower levels in kidney, lung, skin and small intestine. Detected in melanocytes.

It is found in the melanosome. In terms of biological role, rab effector protein involved in melanosome transport. Serves as link between melanosome-bound RAB27A and the motor protein MYO5A. In Mus musculus (Mouse), this protein is Melanophilin (Mlph).